Here is a 395-residue protein sequence, read N- to C-terminus: MLVNIRIDFKIADIETMEKSYAKLDMINAELHEKLDILEEVTLKTCNRYEIYLLIDEEVNIPTTTFIVEKNDMAINHLLRLASGLESMIMGEDQILGQIKTARKNAIKNKTIGPKLEKVFTKAIHVGQTIRKNTHINEGGVSVGSGAVELIEEKYGSLKGKNVLIIGAGEMGTVVSKALLEKETNTIVVANRTYDKARQLAQELDGEAIKFDEMNNELVNIDIVISSTGAPHSIISKERIAFLPEEHLHDMIMLDLANPHDIENDVQELGVKLYNLDDLRYVTDKNKERRNKEAIKAEAIIEDETLLLKESLKQMEITPILSSLNIEAEKIRKQELDKTLHMLDLDKKSSKKVDYLTRSITDKLLYNIINNLKEAAANNDKDTIRNAKKILLEYN.

Residues T45–R48, S87, E92–Q94, and Q98 contribute to the substrate site. C46 serves as the catalytic Nucleophile. Residue G167–G172 participates in NADP(+) binding.

It belongs to the glutamyl-tRNA reductase family. Homodimer.

The enzyme catalyses (S)-4-amino-5-oxopentanoate + tRNA(Glu) + NADP(+) = L-glutamyl-tRNA(Glu) + NADPH + H(+). It participates in porphyrin-containing compound metabolism; protoporphyrin-IX biosynthesis; 5-aminolevulinate from L-glutamyl-tRNA(Glu): step 1/2. Functionally, catalyzes the NADPH-dependent reduction of glutamyl-tRNA(Glu) to glutamate 1-semialdehyde (GSA). The protein is Glutamyl-tRNA reductase of Methanosphaera stadtmanae (strain ATCC 43021 / DSM 3091 / JCM 11832 / MCB-3).